Here is a 95-residue protein sequence, read N- to C-terminus: Neutrophil antibiotic peptide NP-5 (95 aa).

Residues 1-19 (MRTLALLAAILLVTLQAQA) form the signal peptide. A propeptide spanning residues 20 to 62 (ELHSGMADDGVDQQQPRAQDLDVAVYIKQDETSPLEVLGAKAG) is cleaved from the precursor. 3 disulfides stabilise this stretch: cysteine 65–cysteine 93, cysteine 67–cysteine 82, and cysteine 72–cysteine 92.

This sequence belongs to the alpha-defensin family.

It is found in the secreted. In terms of biological role, microbicidal activity. This chain is Neutrophil antibiotic peptide NP-5, found in Oryctolagus cuniculus (Rabbit).